Reading from the N-terminus, the 187-residue chain is RNA 2',3'-cyclic phosphodiesterase (187 aa).

The active-site Proton donor is the His-40. Short sequence motifs (HXTX) lie at residues 40–43 (HLTL) and 125–128 (HITI). Residue His-125 is the Proton acceptor of the active site.

This sequence belongs to the 2H phosphoesterase superfamily. ThpR family.

The catalysed reaction is a 3'-end 2',3'-cyclophospho-ribonucleotide-RNA + H2O = a 3'-end 2'-phospho-ribonucleotide-RNA + H(+). Functionally, hydrolyzes RNA 2',3'-cyclic phosphodiester to an RNA 2'-phosphomonoester. The sequence is that of RNA 2',3'-cyclic phosphodiesterase from Thermotoga maritima (strain ATCC 43589 / DSM 3109 / JCM 10099 / NBRC 100826 / MSB8).